Here is a 312-residue protein sequence, read N- to C-terminus: Small kinetochore-associated protein (312 aa).

The disordered stretch occupies residues 1–171; the sequence is MAAPEAEAQE…PFNKQKPEEE (171 aa). Positions 131–143 are enriched in basic and acidic residues; that stretch reads DVTKVTKSRRENG. The interaction with SPAG5 stretch occupies residues 156-312; sequence LRNSYKPFNK…LEEMEQLLEM (157 aa). 2 coiled-coil regions span residues 166–210 and 246–287; these read QKPE…LEKF and LLET…QFLE.

Part of an astrin (SPAG5)-kinastrin (SKAP) complex containing KNSTRN, SPAG5, PLK1, DYNLL1 and SGO2A. Interacts with SPAG5. Directly binds to microtubules, although at relatively low affinity. Interacts with CENPE; this interaction greatly favors microtubule-binding. Interacts with DSN1/MIS13; leading to localization to kinetochores. Interacts with MAPRE1/EB1; leading to localization to the microtubule plus ends. Interacts with PRPF19. Interacts with DYNLL1. Interacts with MAP4.

The protein resides in the nucleus. It is found in the chromosome. It localises to the centromere. The protein localises to the kinetochore. Its subcellular location is the cytoplasm. The protein resides in the cytoskeleton. It is found in the spindle pole. It localises to the microtubule organizing center. Its function is as follows. Essential component of the mitotic spindle required for faithful chromosome segregation and progression into anaphase. Promotes the metaphase-to-anaphase transition and is required for chromosome alignment, normal timing of sister chromatid segregation, and maintenance of spindle pole architecture. The astrin (SPAG5)-kinastrin (SKAP) complex promotes stable microtubule-kinetochore attachments. Required for kinetochore oscillations and dynamics of microtubule plus-ends during live cell mitosis, possibly by forming a link between spindle microtubule plus-ends and mitotic chromosomes to achieve faithful cell division. The sequence is that of Small kinetochore-associated protein (Knstrn) from Mus musculus (Mouse).